The following is a 257-amino-acid chain: Imidazole glycerol phosphate synthase subunit HisF (257 aa).

Active-site residues include aspartate 12 and aspartate 131.

This sequence belongs to the HisA/HisF family. In terms of assembly, heterodimer of HisH and HisF.

The protein localises to the cytoplasm. It catalyses the reaction 5-[(5-phospho-1-deoxy-D-ribulos-1-ylimino)methylamino]-1-(5-phospho-beta-D-ribosyl)imidazole-4-carboxamide + L-glutamine = D-erythro-1-(imidazol-4-yl)glycerol 3-phosphate + 5-amino-1-(5-phospho-beta-D-ribosyl)imidazole-4-carboxamide + L-glutamate + H(+). The protein operates within amino-acid biosynthesis; L-histidine biosynthesis; L-histidine from 5-phospho-alpha-D-ribose 1-diphosphate: step 5/9. Its function is as follows. IGPS catalyzes the conversion of PRFAR and glutamine to IGP, AICAR and glutamate. The HisF subunit catalyzes the cyclization activity that produces IGP and AICAR from PRFAR using the ammonia provided by the HisH subunit. This Teredinibacter turnerae (strain ATCC 39867 / T7901) protein is Imidazole glycerol phosphate synthase subunit HisF.